Here is a 101-residue protein sequence, read N- to C-terminus: uncharacterized protein (101 aa).

A helical membrane pass occupies residues 13 to 33; that stretch reads FISIMCLFSIPLCFSLSIFFF.

It localises to the membrane. This is an uncharacterized protein from Schizosaccharomyces pombe (strain 972 / ATCC 24843) (Fission yeast).